Reading from the N-terminus, the 577-residue chain is Arginine--tRNA ligase (577 aa).

The 'HIGH' region signature appears at 122–132 (PNVAKEMHVGH).

The protein belongs to the class-I aminoacyl-tRNA synthetase family. In terms of assembly, monomer.

Its subcellular location is the cytoplasm. It catalyses the reaction tRNA(Arg) + L-arginine + ATP = L-arginyl-tRNA(Arg) + AMP + diphosphate. In Salmonella gallinarum (strain 287/91 / NCTC 13346), this protein is Arginine--tRNA ligase.